A 210-amino-acid polypeptide reads, in one-letter code: MRLNVNPTRMELTRLKKQLTTATRGHKLLKDKQDELMRQFILLIRKNNELRQAIEKETQTAMKDFVLAKSTVEEAFIDELLALPAENVSISVVEKNIMSVKVPLMNFQYDETLNETPLEYGYLHSNAELDRSIDGFTQLLPKLLKLAEVEKTCQLMAEEIEKTRRRVNALEYMTIPQLEETIYYIKMKLEENERAEVTRLIKVKNMGTEE.

Belongs to the V-ATPase D subunit family.

In terms of biological role, involved in ATP-driven sodium extrusion. The polypeptide is V-type sodium ATPase subunit D (ntpD) (Enterococcus hirae (strain ATCC 9790 / DSM 20160 / JCM 8729 / LMG 6399 / NBRC 3181 / NCIMB 6459 / NCDO 1258 / NCTC 12367 / WDCM 00089 / R)).